The chain runs to 155 residues: Anaerobic ribonucleoside-triphosphate reductase-activating protein (155 aa).

[4Fe-4S] cluster is bound by residues Cys26, Cys30, and Cys33. Residues Gly32 to Tyr34 and Gly74 each bind S-adenosyl-L-methionine.

This sequence belongs to the organic radical-activating enzymes family. In terms of assembly, forms a tetramer composed of two NrdD and two NrdG subunits. It depends on [4Fe-4S] cluster as a cofactor.

The protein localises to the cytoplasm. The enzyme catalyses glycyl-[protein] + reduced [flavodoxin] + S-adenosyl-L-methionine = glycin-2-yl radical-[protein] + semiquinone [flavodoxin] + 5'-deoxyadenosine + L-methionine + H(+). Its function is as follows. Activation of anaerobic ribonucleoside-triphosphate reductase under anaerobic conditions by generation of an organic free radical, using S-adenosylmethionine and reduced flavodoxin as cosubstrates to produce 5'-deoxy-adenosine. In Vibrio cholerae serotype O1 (strain ATCC 39315 / El Tor Inaba N16961), this protein is Anaerobic ribonucleoside-triphosphate reductase-activating protein (nrdG).